The primary structure comprises 239 residues: Cysteine-rich venom protein ENH1 (239 aa).

The N-terminal stretch at 1-18 is a signal peptide; sequence MIVFILLSLAAVLQQFVA. Positions 37-165 constitute an SCP domain; sequence VDMHNSFRRS…PYNYFYVCQY (129 aa). 7 disulfides stabilise this stretch: C74-C152, C91-C166, C147-C163, C185-C192, C188-C197, C210-C228, and C219-C232. A ShKT domain is found at 201-234; it reads CPITNTFTNCDSLLQQNSCEDSYIKTNCGASCFC.

The protein belongs to the CRISP family. Expressed by the venom gland.

It localises to the secreted. Functionally, blocks contraction of smooth muscle elicited by high potassium-induced depolarization, but does not block caffeine-stimulated contraction. May target voltage-gated calcium channels on smooth muscle. This Pseudoferania polylepis (Macleay's water snake) protein is Cysteine-rich venom protein ENH1.